The following is a 519-amino-acid chain: 4-nitrophenol 2-monooxygenase, oxygenase component (519 aa).

It belongs to the FADH(2)-utilizing monooxygenase family. Homotetramer. 4-nitrophenol 2-monooxygenase complex consists of an oxygenase component NphA1 and a flavin reductase component NphA2. FAD serves as cofactor.

The enzyme catalyses 4-nitrophenol + NADH + O2 + H(+) = 4-nitrocatechol + NAD(+) + H2O. With respect to regulation, partially inhibited by concentrations of FAD above 10 uM and completely inhibited by concentrations above 50 uM. Its function is as follows. Utilizes the flavins supplied by NphA2 to catalyze the degradation of 4-nitrophenol (4-NP) via 4-nitrocatechol (4-NC) which is used as the sole carbon, nitrogen, and energy source. Can also degrade phenol and 4-chlorophenol as rapidly as 4-NP. The chain is 4-nitrophenol 2-monooxygenase, oxygenase component (nphA1) from Rhodococcus sp.